We begin with the raw amino-acid sequence, 396 residues long: MIRRLAAFSALSGLATAWLPEVNKKITSTNGTNLFTSSNGKIRGVNLGSQFVFEPWIAEKAWSDMGCGGQKSEFDCVSRLGQANANSAFASHWGSWITQDDIAEMVSYGLNTIRVPVGYWMREDLVYSDSEHFPQGGLQYLENLCEWASDAGLYIIIDLHGAPGAQTPQNPFTGQYAPIAGFYQDYQFERALKFLEWMTTNIHQNDKFRNVGMLEVVNEPVQDAGKVGSMRSSYYPNAFKRIRAAEQSLNIDRNNYLHIQMMDRLWGSGDPNESLTDTYYAAYDDHRYLKWASVAVSKDSYISTSCSDQLNSNTPTIVGEWSLSVPDNVQWNSDWSPDSNKDFYKKWFAAQVTAYERQQGWIFWTWKAQLGDYRWSYQGGLLLTRPGIGDQQVLTL.

An N-terminal signal peptide occupies residues 1–17 (MIRRLAAFSALSGLATA). The N-linked (GlcNAc...) asparagine glycan is linked to N30. Residue E219 is the Proton donor of the active site. N272 carries N-linked (GlcNAc...) asparagine glycosylation. E320 acts as the Nucleophile in catalysis.

This sequence belongs to the glycosyl hydrolase 5 (cellulase A) family.

It localises to the secreted. It carries out the reaction Random hydrolysis of (1-&gt;6)-linkages in (1-&gt;6)-beta-D-glucans.. Functionally, beta-glucanases participate in the metabolism of beta-glucan, the main structural component of the cell wall. Acts on lutean, pustulan and 1,6-oligo-beta-D-glucosides. The chain is Probable glucan endo-1,6-beta-glucosidase B (exgB) from Aspergillus fumigatus (strain CBS 144.89 / FGSC A1163 / CEA10) (Neosartorya fumigata).